Reading from the N-terminus, the 910-residue chain is 2-oxoglutarate dehydrogenase E1 component (910 aa).

It belongs to the alpha-ketoglutarate dehydrogenase family. Homodimer. Part of the 2-oxoglutarate dehydrogenase (OGDH) complex composed of E1 (2-oxoglutarate dehydrogenase), E2 (dihydrolipoamide succinyltransferase) and E3 (dihydrolipoamide dehydrogenase); the complex contains multiple copies of the three enzymatic components (E1, E2 and E3). Thiamine diphosphate serves as cofactor.

It catalyses the reaction N(6)-[(R)-lipoyl]-L-lysyl-[protein] + 2-oxoglutarate + H(+) = N(6)-[(R)-S(8)-succinyldihydrolipoyl]-L-lysyl-[protein] + CO2. Its function is as follows. E1 component of the 2-oxoglutarate dehydrogenase (OGDH) complex which catalyzes the decarboxylation of 2-oxoglutarate, the first step in the conversion of 2-oxoglutarate to succinyl-CoA and CO(2). This Staphylococcus aureus (strain N315) protein is 2-oxoglutarate dehydrogenase E1 component.